A 716-amino-acid chain; its full sequence is Forkhead box protein P2 (716 aa).

Residues 1–28 (MMQESATETISNSSMNQNGMSTLSSQLD) are compositionally biased toward polar residues. 2 disordered regions span residues 1-45 (MMQE…SEVS) and 286-340 (KHGG…TGAS). Over residues 293 to 306 (TTNNSSSTTSSTTS) the composition is skewed to low complexity. Residues 316–325 (SIVNGQSSVL) show a composition bias toward polar residues. Residues 327–338 (ARRDSSSHEETG) are compositionally biased toward basic and acidic residues. The C2H2-type zinc-finger motif lies at 347-372 (GVCKWPGCESICEDFGQFLKHLNNEH). Positions 389–410 (VQQLEIQLSKERERLQAMMTHL) are leucine-zipper. A CTBP1-binding region spans residues 423–427 (PLNLV). The segment covering 439-460 (TSPQSLPQTPTTPTAPVTPITQ) has biased composition (low complexity). The disordered stretch occupies residues 439-466 (TSPQSLPQTPTTPTAPVTPITQGPSVIT). Positions 505–595 (RPPFTYATLI…SQKITGSPTL (91 aa)) form a DNA-binding region, fork-head. Disordered regions lie at residues 650–669 (LDHIDSNGNSSPGCSPQPHI) and 679–716 (VIAEDEDCPMSLVTTANHSPELEDDREIEEEPLSEDLE). The span at 700-716 (LEDDREIEEEPLSEDLE) shows a compositional bias: acidic residues.

As to quaternary structure, forms homodimers and heterodimers with FOXP1 and FOXP4. Dimerization is required for DNA-binding. Interacts with CTBP1. Interacts with FOXP1. Interacts with TBR1. Interacts with ZMYM2.

Its subcellular location is the nucleus. In terms of biological role, transcriptional repressor that may play a role in the specification and differentiation of lung epithelium. May also play a role in developing neural, gastrointestinal and cardiovascular tissues. Can act with CTBP1 to synergistically repress transcription but CTPBP1 is not essential. Plays a role in synapse formation by regulating SRPX2 levels. This is Forkhead box protein P2 (FOXP2) from Pan paniscus (Pygmy chimpanzee).